Here is a 364-residue protein sequence, read N- to C-terminus: tRNA 2-selenouridine synthase (364 aa).

Residues 14 to 137 (LIADTPIIDV…LRQTAIQATI (124 aa)) enclose the Rhodanese domain. The active-site S-selanylcysteine intermediate is Cys97.

It belongs to the SelU family. In terms of assembly, monomer.

The enzyme catalyses 5-methylaminomethyl-2-thiouridine(34) in tRNA + selenophosphate + (2E)-geranyl diphosphate + H2O + H(+) = 5-methylaminomethyl-2-selenouridine(34) in tRNA + (2E)-thiogeraniol + phosphate + diphosphate. The catalysed reaction is 5-methylaminomethyl-2-thiouridine(34) in tRNA + (2E)-geranyl diphosphate = 5-methylaminomethyl-S-(2E)-geranyl-thiouridine(34) in tRNA + diphosphate. It catalyses the reaction 5-methylaminomethyl-S-(2E)-geranyl-thiouridine(34) in tRNA + selenophosphate + H(+) = 5-methylaminomethyl-2-(Se-phospho)selenouridine(34) in tRNA + (2E)-thiogeraniol. It carries out the reaction 5-methylaminomethyl-2-(Se-phospho)selenouridine(34) in tRNA + H2O = 5-methylaminomethyl-2-selenouridine(34) in tRNA + phosphate. Functionally, involved in the post-transcriptional modification of the uridine at the wobble position (U34) of tRNA(Lys), tRNA(Glu) and tRNA(Gln). Catalyzes the conversion of 2-thiouridine (S2U-RNA) to 2-selenouridine (Se2U-RNA). Acts in a two-step process involving geranylation of 2-thiouridine (S2U) to S-geranyl-2-thiouridine (geS2U) and subsequent selenation of the latter derivative to 2-selenouridine (Se2U) in the tRNA chain. This is tRNA 2-selenouridine synthase from Shigella dysenteriae serotype 1 (strain Sd197).